We begin with the raw amino-acid sequence, 1084 residues long: Myosin heavy chain, skeletal muscle (1084 aa).

Disordered stretches follow at residues 1–20 (SAET…KTKE), 270–292 (EIEA…SREL), and 298–317 (RLEE…KKRE). Positions 1–258 (SAETEKEMAN…SKIEDEQALM (258 aa)) are alpha-helical tailpiece (S2). A rodlike tail (S2 and LMM domains) region spans residues 259–1084 (TNLQRIEELE…DVHSKVISEE (826 aa)). Residues 273-292 (AERASRAKAEKQRSDLSREL) show a composition bias toward basic and acidic residues. The stretch at 455–1084 (QAFTQQIEGL…DVHSKVISEE (630 aa)) forms a coiled coil.

Muscle myosin is a hexameric protein that consists of 2 heavy chain subunits (MHC), 2 alkali light chain subunits (MLC) and 2 regulatory light chain subunits (MLC-2).

It is found in the cytoplasm. The protein localises to the myofibril. In terms of biological role, muscle contraction. The protein is Myosin heavy chain, skeletal muscle of Oryctolagus cuniculus (Rabbit).